The primary structure comprises 753 residues: MPVLWLADVDKNDIPLVGGKGANLGELLRAEIPVPDGFVVDARTFREFIQKTGIAEKIYSLLRELDVEDTEKLDAVSREIREIIEKTEMPEDIEREIREAYRKLCEEEGKEVYVAVRSSATAEDLPDASFAGQQETYLNVVGEDEVVEKVKKCWGSLFTPRAIYYRVQKGFRHEDVSIAVVVQKMVNSEKSGVMFTSHPVSGEKKCIIEAVFGLGEAIVSGLVTPDTYVYDRVKRKIEEVKIGEKKFMLTRKDGKTVKVELPPEKANERVLSDEEIEKLVTLGELIEDHYGKPQDVEWAIEGGKIYIVQSRPITTIRKEKKEAEEEVSEEAEGKILLKGLGASPGIASGKVKVIFSEKEISKVEEGDILVTTMTTPDMVPAMKRAAAIVTDEGGMTCHAAIVSRELGVPAVVGTKVATKVLKDGMVVTVDGEKGIVYEGRIEKKEEPKPVVASAPIITATEVKVNISIPDVAERVARETNADGVGLFRIEHMVLGLEKHPMKFIRDGEIDRYIDLLYQEMKKVVKAFYPKPVWIRTIDAPTDEFRAMEGGEDEPIEANPMLGFRGIRRDLAEEEHFRAEMRAIKKLVDEGYTNVGVMLPLITSPEEVKRAKEIAISEGLPLDKIEFGVMVETPAAALILEDIIKEGIDFVSLGTNDLTQYTLAVDRNNENVAYLYNETHPAVLKLIERTIKVCKEHGVKSSICGQAGSYPHVVEKLVEFGIDSVSANPDAVQRIREVVARAEKRIILEKLRKI.

The active-site Tele-phosphohistidine intermediate is His398. Residues Arg488, Arg535, Glu631, Gly653, Thr654, Asn655, and Asp656 each coordinate substrate. A Mg(2+)-binding site is contributed by Glu631. Asp656 is a binding site for Mg(2+). Cys703 (proton donor) is an active-site residue.

Belongs to the PEP-utilizing enzyme family. The cofactor is Mg(2+).

The enzyme catalyses pyruvate + ATP + H2O = phosphoenolpyruvate + AMP + phosphate + 2 H(+). Its pathway is carbohydrate biosynthesis; gluconeogenesis. In terms of biological role, catalyzes the phosphorylation of pyruvate to phosphoenolpyruvate. This Archaeoglobus fulgidus (strain ATCC 49558 / DSM 4304 / JCM 9628 / NBRC 100126 / VC-16) protein is Probable phosphoenolpyruvate synthase (ppsA).